The primary structure comprises 864 residues: Protein sey1 (864 aa).

Topologically, residues 1–747 are cytoplasmic; the sequence is MATNGHFATI…KRSAIGGMTQ (747 aa). A GB1/RHD3-type G domain is found at 49-305; it reads GFNYHLISVF…IPADGFSRYA (257 aa). A GTP-binding site is contributed by 59-66; that stretch reads GSQSTGKS. Residues 480–506 are a coiled coil; the sequence is SDYKQELALYEKELADVSGRLRREEMR. A disordered region spans residues 675-701; the sequence is DRWIGHTPSSATPADEEDLPPIGGVDE. Over residues 688–701 the composition is skewed to acidic residues; the sequence is ADEEDLPPIGGVDE. A helical transmembrane segment spans residues 748 to 768; that stretch reads VPLYFYGLLLALGWNEIIAVL. Over 769–771 the chain is Lumenal; that stretch reads RNP. The helical transmembrane segment at 772–792 threads the bilayer; it reads AYFFLLFVCAVGAYVTYQLNL. Residues 793-864 lie on the Cytoplasmic side of the membrane; the sequence is WGPIIKMTEA…TSADEDMDDL (72 aa). The disordered stretch occupies residues 830–864; the sequence is AMSAGSGRSGEQYELSDLSKKGKARTSADEDMDDL.

Belongs to the TRAFAC class dynamin-like GTPase superfamily. GB1/RHD3 GTPase family. RHD3 subfamily.

It localises to the endoplasmic reticulum membrane. Cooperates with the reticulon proteins and tubule-shaping DP1 family proteins to generate and maintain the structure of the tubular endoplasmic reticulum network. Has GTPase activity, which is required for its function in ER organization. This is Protein sey1 (sey1) from Neosartorya fischeri (strain ATCC 1020 / DSM 3700 / CBS 544.65 / FGSC A1164 / JCM 1740 / NRRL 181 / WB 181) (Aspergillus fischerianus).